The chain runs to 258 residues: Imidazole glycerol phosphate synthase subunit HisF (258 aa).

Residues D11 and D130 contribute to the active site.

It belongs to the HisA/HisF family. In terms of assembly, heterodimer of HisH and HisF.

The protein localises to the cytoplasm. It carries out the reaction 5-[(5-phospho-1-deoxy-D-ribulos-1-ylimino)methylamino]-1-(5-phospho-beta-D-ribosyl)imidazole-4-carboxamide + L-glutamine = D-erythro-1-(imidazol-4-yl)glycerol 3-phosphate + 5-amino-1-(5-phospho-beta-D-ribosyl)imidazole-4-carboxamide + L-glutamate + H(+). Its pathway is amino-acid biosynthesis; L-histidine biosynthesis; L-histidine from 5-phospho-alpha-D-ribose 1-diphosphate: step 5/9. Functionally, IGPS catalyzes the conversion of PRFAR and glutamine to IGP, AICAR and glutamate. The HisF subunit catalyzes the cyclization activity that produces IGP and AICAR from PRFAR using the ammonia provided by the HisH subunit. The chain is Imidazole glycerol phosphate synthase subunit HisF from Yersinia pseudotuberculosis serotype O:1b (strain IP 31758).